A 495-amino-acid polypeptide reads, in one-letter code: 3-octaprenyl-4-hydroxybenzoate carboxy-lyase (495 aa).

N171 is a binding site for Mn(2+). Residues 174-176 (IYR), 188-190 (RWL), and 193-194 (RG) each bind prenylated FMN. E237 provides a ligand contact to Mn(2+). D286 (proton donor) is an active-site residue.

It belongs to the UbiD family. As to quaternary structure, homohexamer. Prenylated FMN serves as cofactor. It depends on Mn(2+) as a cofactor.

The protein resides in the cell membrane. It carries out the reaction a 4-hydroxy-3-(all-trans-polyprenyl)benzoate + H(+) = a 2-(all-trans-polyprenyl)phenol + CO2. It functions in the pathway cofactor biosynthesis; ubiquinone biosynthesis. Its function is as follows. Catalyzes the decarboxylation of 3-octaprenyl-4-hydroxy benzoate to 2-octaprenylphenol, an intermediate step in ubiquinone biosynthesis. The protein is 3-octaprenyl-4-hydroxybenzoate carboxy-lyase of Hamiltonella defensa subsp. Acyrthosiphon pisum (strain 5AT).